Reading from the N-terminus, the 500-residue chain is Probable zinc metalloprotease MGYG_02393 (500 aa).

Positions 1 to 24 are cleaved as a signal peptide; the sequence is MHLSMGGLLPGLALLASANALALA. N-linked (GlcNAc...) asparagine glycosylation is found at Asn61, Asn103, and Asn124. Positions 174, 194, and 230 each coordinate Zn(2+). An N-linked (GlcNAc...) asparagine glycan is attached at Asn245. Asp257 is a Zn(2+) binding site. Positions 414–500 constitute a Fibronectin type-III domain; sequence MPRNVRVNTS…ERGVAVLPFP (87 aa). Residues Asn421 and Asn427 are each glycosylated (N-linked (GlcNAc...) asparagine).

Belongs to the peptidase M28 family. M28B subfamily. Zn(2+) serves as cofactor.

The protein resides in the secreted. The protein is Probable zinc metalloprotease MGYG_02393 of Arthroderma gypseum (strain ATCC MYA-4604 / CBS 118893) (Microsporum gypseum).